The primary structure comprises 464 residues: Neuronal acetylcholine receptor subunit beta-3 (464 aa).

An N-terminal signal peptide occupies residues 1–30; it reads MTGFLRVFLVLSATLSGSWVTLTATAGLSS. Topologically, residues 31 to 238 are extracellular; it reads VAEHEDALLR…VTYSFVLRRL (208 aa). Asn55 and Asn172 each carry an N-linked (GlcNAc...) asparagine glycan. A disulfide bridge connects residues Cys159 and Cys173. A run of 3 helical transmembrane segments spans residues 239-263, 271-288, and 305-326; these read PLFY…VFYL, LSLS…LLVI, and YLLF…VINV. Residues 327 to 434 are Cytoplasmic-facing; it reads HHRSSSTYHP…WKFVAQVLDR (108 aa). A helical transmembrane segment spans residues 435–453; it reads IFLWLFLIASVLGSILIFI.

Belongs to the ligand-gated ion channel (TC 1.A.9) family. Acetylcholine receptor (TC 1.A.9.1) subfamily. Beta-3/CHRNB3 sub-subfamily. In terms of assembly, neuronal AChR seems to be composed of two different type of subunits: alpha and beta. CHRNB3/beta-3 subunit is only able to form functional nAChRs when co-assembled with another beta subunit. Participates in pentameric assemblies along with CHRNA4/alpha-4 and CHRNB2/beta-2 subunits and with CHRNA6/alpha-6 as well, forming stoichiometries such as (CHRNA3:CHRNB4)2:CHRNB3, (CHRNA4:CHRNB2)2:CHRNB3 or (CHRNA6:CHRNB2)2:CHRNB3.

It is found in the synaptic cell membrane. It localises to the cell membrane. It carries out the reaction Ca(2+)(in) = Ca(2+)(out). The enzyme catalyses K(+)(in) = K(+)(out). It catalyses the reaction Na(+)(in) = Na(+)(out). With respect to regulation, activated by a myriad of ligands such as acetylcholine, cytisine, nicotine, choline and epibatidine. Component of neuronal acetylcholine receptors (nAChRs) that function as pentameric, ligand-gated cation channels with high calcium permeability among other activities. nAChRs are excitatory neurotrasnmitter receptors formed by a collection of nAChR subunits known to mediate synaptic transmission in the nervous system and the neuromuscular junction. Each nAchR subunit confers differential attributes to channel properties, including activation, deactivation and desensitization kinetics, pH sensitivity, cation permeability, and binding to allosteric modulators. Has an accessory rather than functional role and is only able to form functional nAChRs when co-assembled with another beta subunit. Participates in pentameric assemblies along with CHRNA3, CHRNA4, CHRNA6, CHRNB2 and CHRNB4. Modulates receptor assembly and increases receptor sensitivity to nicotine when associated with CHRNB2, CHRNA4 and/or CHRNA6 as well as CHRNA3 and CHRNB4. Seems to play a role in nicotine addiction. This Rattus norvegicus (Rat) protein is Neuronal acetylcholine receptor subunit beta-3 (Chrnb3).